The primary structure comprises 382 residues: 3-isopropylmalate dehydrogenase (382 aa).

Gly-91–Glu-102 serves as a coordination point for NAD(+). Residues Arg-109, Arg-119, Arg-148, and Asp-240 each contribute to the substrate site. Positions 240, 265, and 269 each coordinate Mg(2+). An NAD(+)-binding site is contributed by Gly-304–Asn-315.

The protein belongs to the isocitrate and isopropylmalate dehydrogenases family. As to quaternary structure, homodimer. It depends on Mg(2+) as a cofactor. Mn(2+) serves as cofactor.

It localises to the cytoplasm. The catalysed reaction is (2R,3S)-3-isopropylmalate + NAD(+) = 4-methyl-2-oxopentanoate + CO2 + NADH. It functions in the pathway amino-acid biosynthesis; L-leucine biosynthesis; L-leucine from 3-methyl-2-oxobutanoate: step 3/4. Functionally, catalyzes the oxidation of 3-carboxy-2-hydroxy-4-methylpentanoate (3-isopropylmalate) to 3-carboxy-4-methyl-2-oxopentanoate. The product decarboxylates to 4-methyl-2 oxopentanoate. The polypeptide is 3-isopropylmalate dehydrogenase (LEU2) (Debaryomyces hansenii (strain ATCC 36239 / CBS 767 / BCRC 21394 / JCM 1990 / NBRC 0083 / IGC 2968) (Yeast)).